The following is a 305-amino-acid chain: Cyclin-dependent kinase 3 (305 aa).

The Protein kinase domain occupies 4–286 (FQKVEKIGEG…AKTALAHPYF (283 aa)). ATP is bound by residues 10–18 (IGEGTYGVV) and Lys-33. The active-site Proton acceptor is Asp-127.

This sequence belongs to the protein kinase superfamily. CMGC Ser/Thr protein kinase family. CDC2/CDKX subfamily. As to quaternary structure, interacts with CABLES1 and CABLES2. Interacts with ATF1. Binding to CCNC/cyclin-C promotes RB1 phosphorylation. As to expression, expressed in cancer cell lines and glioblastoma tissue.

It carries out the reaction L-seryl-[protein] + ATP = O-phospho-L-seryl-[protein] + ADP + H(+). It catalyses the reaction L-threonyl-[protein] + ATP = O-phospho-L-threonyl-[protein] + ADP + H(+). Its function is as follows. Serine/threonine-protein kinase that plays a critical role in the control of the eukaryotic cell cycle; involved in G0-G1 and G1-S cell cycle transitions. Interacts with CCNC/cyclin-C during interphase. Phosphorylates histone H1, ATF1, RB1 and CABLES1. ATF1 phosphorylation triggers ATF1 transactivation and transcriptional activities, and promotes cell proliferation and transformation. CDK3/cyclin-C mediated RB1 phosphorylation is required for G0-G1 transition. Promotes G1-S transition probably by contributing to the activation of E2F1, E2F2 and E2F3 in a RB1-independent manner. The sequence is that of Cyclin-dependent kinase 3 (CDK3) from Homo sapiens (Human).